The following is a 261-amino-acid chain: Acetylglutamate kinase (261 aa).

Substrate is bound by residues 48–49, arginine 70, and asparagine 164; that span reads GG.

This sequence belongs to the acetylglutamate kinase family. ArgB subfamily.

Its subcellular location is the cytoplasm. It carries out the reaction N-acetyl-L-glutamate + ATP = N-acetyl-L-glutamyl 5-phosphate + ADP. Its pathway is amino-acid biosynthesis; L-arginine biosynthesis; N(2)-acetyl-L-ornithine from L-glutamate: step 2/4. Catalyzes the ATP-dependent phosphorylation of N-acetyl-L-glutamate. In Roseiflexus sp. (strain RS-1), this protein is Acetylglutamate kinase.